We begin with the raw amino-acid sequence, 344 residues long: Heat-inducible transcription repressor HrcA (344 aa).

It belongs to the HrcA family.

Functionally, negative regulator of class I heat shock genes (grpE-dnaK-dnaJ and groELS operons). Prevents heat-shock induction of these operons. This is Heat-inducible transcription repressor HrcA from Streptococcus equi subsp. zooepidemicus (strain MGCS10565).